A 103-amino-acid polypeptide reads, in one-letter code: Large ribosomal subunit protein bL21 (103 aa).

This sequence belongs to the bacterial ribosomal protein bL21 family. As to quaternary structure, part of the 50S ribosomal subunit. Contacts protein L20.

In terms of biological role, this protein binds to 23S rRNA in the presence of protein L20. The sequence is that of Large ribosomal subunit protein bL21 from Borreliella afzelii (strain PKo) (Borrelia afzelii).